The chain runs to 121 residues: Protein TusC (121 aa).

It belongs to the DsrF/TusC family. In terms of assembly, heterohexamer, formed by a dimer of trimers. The hexameric TusBCD complex contains 2 copies each of TusB, TusC and TusD. The TusBCD complex interacts with TusE.

It is found in the cytoplasm. Its function is as follows. Part of a sulfur-relay system required for 2-thiolation of 5-methylaminomethyl-2-thiouridine (mnm(5)s(2)U) at tRNA wobble positions. This Yersinia enterocolitica serotype O:8 / biotype 1B (strain NCTC 13174 / 8081) protein is Protein TusC.